The sequence spans 378 residues: Chitinase (378 aa).

The signal sequence occupies residues 1–28; that stretch reads MNFTVKYSFLVICLLCCLLSTYVSVIEG. In terms of domain architecture, GH18 spans 53-378; that stretch reads GIIQGYYPSW…AIEYFVESLH (326 aa). E174 acts as the Proton donor in catalysis. C220 and C230 are oxidised to a cystine.

This sequence belongs to the glycosyl hydrolase 18 family. Forms a hetero-multimeric, high molecular weight complex composed of at least CHT1, SOAP AND WARP. Within the complex, may interact with WARP via a disulfide bond.

The protein resides in the secreted. Its subcellular location is the cytoplasmic vesicle. The protein localises to the secretory vesicle. It localises to the microneme. The enzyme catalyses Random endo-hydrolysis of N-acetyl-beta-D-glucosaminide (1-&gt;4)-beta-linkages in chitin and chitodextrins.. Its activity is regulated as follows. Inhibited by allosamidin. Functionally, endochitinase that cleaves beta-1,4-linkages between tri- and tetramers of N-acetylglucosamine (GlcNAc) from penta- and hexameric chitin oligomers. Does not cleave smaller chitin oligosaccharides. Required to cross the acellular, chitin-containing peritrophic matrix (PM) which is formed around the ingested blood meal in the mosquito midgut allowing the ookinete to invade the mosquito gut epithelium. This is Chitinase from Plasmodium falciparum (isolate 3D7).